The primary structure comprises 421 residues: POU domain, class 4, transcription factor 1 (421 aa).

Positions Arg57–Ile66 match the POU-IV box motif. Disordered stretches follow at residues Ser94–Leu117 and Gly133–His200. Positions Ala99–His108 are enriched in basic residues. Residues Gly133–Gly186 are compositionally biased toward gly residues. In terms of domain architecture, POU-specific spans Asp262 to Glu339. Positions Lys357–Lys416 form a DNA-binding region, homeobox.

The protein belongs to the POU transcription factor family. Class-4 subfamily. Interacts (via N-terminus) with RIT2; the interaction controls POU4F1 transactivation activity on some neuronal target genes. Isoform 1 interacts with POU4F2 isoform 2; this interaction inhibits both POU4F1 DNA-binding and transcriptional activities. Isoform 1 interacts (C-terminus) with ESR1 (via DNA-binding domain); this interaction decreases the estrogen receptor ESR1 transcriptional activity in a DNA- and ligand 17-beta-estradiol-independent manner. As to expression, expressed in mature osteoclasts (at protein level). Brain, peripheral sensory nervous system and retina. In the adult nervous system, predominates in the medial habenula, superficial gray of the superior colliculus, red nucleus, mesencephalic nucleus of the trigeminal ganglion, nucleus ambiguus, inferior olivary nucleus, and peripheral sensory ganglia.

It localises to the nucleus. It is found in the cytoplasm. Its function is as follows. Multifunctional transcription factor with different regions mediating its different effects. Acts by binding (via its C-terminal domain) to sequences related to the consensus octamer motif 5'-ATGCAAAT-3' in the regulatory regions of its target genes. Regulates the expression of specific genes involved in differentiation and survival within a subset of neuronal lineages. It has been shown that activation of some of these genes requires its N-terminal domain, maybe through a neuronal-specific cofactor. Activates BCL2 expression and protects neuronal cells from apoptosis (via the N-terminal domain). Induces neuronal process outgrowth and the coordinate expression of genes encoding synaptic proteins. Exerts its major developmental effects in somatosensory neurons and in brainstem nuclei involved in motor control. Stimulates the binding affinity of the nuclear estrogene receptor ESR1 to DNA estrogen response element (ERE), and hence modulates ESR1-induced transcriptional activity. May positively regulate POU4F2 and POU4F3. Regulates dorsal root ganglion sensory neuron specification and axonal projection into the spinal cord. Plays a role in TNFSF11-mediated terminal osteoclast differentiation. Negatively regulates its own expression interacting directly with a highly conserved autoregulatory domain surrounding the transcription initiation site. Functionally, able to act as transcription factor, cannot regulate the expression of the same subset of genes than isoform 1. Does not have antiapoptotic effect on neuronal cells. The protein is POU domain, class 4, transcription factor 1 (Pou4f1) of Mus musculus (Mouse).